A 384-amino-acid chain; its full sequence is MAKHLFTSESVSEGHPDKIADQISDAVLDAILEQDPKARVACETYVKTGMVLVGGEITTSAWVDIEEITRNTVREIGYVHSDMGFDANSCAVLSAIGKQSPDINQGVDRADPLEQGAGDQGLMFGYATNETDVLMPAPITYAHRLVQRQAEVRKNGTLPWLRPDAKSQVTFQYDDGKIVGIDAVVLSTQHSEEIDQKSLQEAVMEEIIKPILPAEWLTSATTFFINPTGRFVIGGPMGDCGLTGRKIIVDTYGGMARHGGGAFSGKDPSKVDRSAAYAARYVAKNIVAAGLADRCEIQVSYAIGVAEPTSIMVETFGTEKVPSEQLTLLVREFFDLRPYGLIQMLDLLHPIYKETAAYGHFGREHFPWEKTDKAQLLRDAAGLK.

His15 serves as a coordination point for ATP. Asp17 is a Mg(2+) binding site. Residue Glu43 participates in K(+) binding. Glu56 and Gln99 together coordinate L-methionine. The tract at residues 99 to 109 (QSPDINQGVDR) is flexible loop. ATP is bound by residues 164–166 (DAK), 230–231 (RF), Asp239, 245–246 (RK), Ala262, and Lys266. Asp239 is a binding site for L-methionine. Lys270 provides a ligand contact to L-methionine.

Belongs to the AdoMet synthase family. In terms of assembly, homotetramer; dimer of dimers. The cofactor is Mg(2+). It depends on K(+) as a cofactor.

It localises to the cytoplasm. It carries out the reaction L-methionine + ATP + H2O = S-adenosyl-L-methionine + phosphate + diphosphate. It participates in amino-acid biosynthesis; S-adenosyl-L-methionine biosynthesis; S-adenosyl-L-methionine from L-methionine: step 1/1. Functionally, catalyzes the formation of S-adenosylmethionine (AdoMet) from methionine and ATP. The overall synthetic reaction is composed of two sequential steps, AdoMet formation and the subsequent tripolyphosphate hydrolysis which occurs prior to release of AdoMet from the enzyme. The chain is S-adenosylmethionine synthase from Shigella boydii serotype 18 (strain CDC 3083-94 / BS512).